The following is a 495-amino-acid chain: MSTRSSFADEEQNKVPRIMTFRPSYEEFQNFSAYIEYIESRGAHLAGLAKIQPPAEWVPRKSGYDIDNINMTIPAPICQVVTGAHGVYQQINIQQRRQMTLRQFMEKANSELHQTPRHFDYDDLERKYWKNITYISPLYAADVKGSLSDEDLDVWNIGRLDTILNLVNTDYNIIIDGVNTAYLYFGMWKSSFAWHTEDMDLYSINYLHFGAPKTWYAIPPAYGRRLEKLANETFSENYQECNAYLRHKMTMISPKVLRQHNIPYNKITQEAGEIMITFPFGYHAGFNHGFNGAESTNFASKRWIEYGKRASICRCRSDMVKISMETFVRRFQPERYDNWLKGQDMGCHPEEPGKICAAAPPTLNEYEKQENLRAAKSEEESPQKRGCSLAGNGCERNAESAEDVDDKASVSSYSSCRQLQPVVKLRKLPTIASVPEPSSAPKRYDFNTEAVVRVKRLWNELPCPDRGANLLTNGVVKNTKRMRFQTKVLTLDDED.

Residues 18–60 (IMTFRPSYEEFQNFSAYIEYIESRGAHLAGLAKIQPPAEWVPR) enclose the JmjN domain. Tyr139 is a 2-oxoglutarate binding site. The JmjC domain maps to 149–315 (DEDLDVWNIG…YGKRASICRC (167 aa)). Fe cation is bound by residues His195 and Glu197. 2-oxoglutarate contacts are provided by Asn205 and Lys213. The Zn(2+) site is built by Cys241 and His247. Lys248 contacts 2-oxoglutarate. Fe cation is bound at residue His283. Positions 313 and 315 each coordinate Zn(2+). Ser409 carries the post-translational modification Phosphoserine.

This sequence belongs to the JHDM3 histone demethylase family. The cofactor is Fe(2+).

It is found in the nucleus. The catalysed reaction is N(6),N(6),N(6)-trimethyl-L-lysyl(9)-[histone H3] + 2 2-oxoglutarate + 2 O2 = N(6)-methyl-L-lysyl(9)-[histone H3] + 2 formaldehyde + 2 succinate + 2 CO2. It catalyses the reaction N(6),N(6),N(6)-trimethyl-L-lysyl(36)-[histone H3] + 2 2-oxoglutarate + 2 O2 = N(6)-methyl-L-lysyl(36)-[histone H3] + 2 formaldehyde + 2 succinate + 2 CO2. Its function is as follows. Probable histone demethylase that specifically demethylates 'Lys-9' and 'Lys-36' residues of histone H3, thereby playing a central role in histone code. Demethylation of Lys residue generates formaldehyde and succinate. This Drosophila melanogaster (Fruit fly) protein is Probable lysine-specific demethylase 4A (Kdm4A).